A 533-amino-acid chain; its full sequence is Flavin-containing monooxygenase 5 (533 aa).

Position 5 is a dimethylated arginine (arginine 5). Residues 10-14, glutamate 33, and 41-42 contribute to the FAD site; these read GSGAS and LW. Residue serine 54 is modified to Phosphoserine. Phosphotyrosine is present on tyrosine 56. Residue serine 58 is modified to Phosphoserine. 62 to 63 contacts FAD; that stretch reads NT. 196-199 contributes to the NADP(+) binding site; the sequence is SGGD. Threonine 284 is modified (phosphothreonine). The residue at position 401 (serine 401) is a Phosphoserine. Residues 513–533 form a helical membrane-spanning segment; it reads LVTVRVLMLAVTFLAVILAYF.

Belongs to the FMO family. It depends on FAD as a cofactor.

It is found in the microsome membrane. Its subcellular location is the endoplasmic reticulum membrane. It catalyses the reaction N,N-dimethylaniline + NADPH + O2 + H(+) = N,N-dimethylaniline N-oxide + NADP(+) + H2O. The catalysed reaction is NADPH + O2 + H(+) = H2O2 + NADP(+). The enzyme catalyses heptan-2-one + NADPH + O2 + H(+) = pentyl acetate + NADP(+) + H2O. It carries out the reaction octan-3-one + NADPH + O2 + H(+) = pentyl propanoate + NADP(+) + H2O. It catalyses the reaction octan-3-one + NADPH + O2 + H(+) = ethyl hexanoate + NADP(+) + H2O. The catalysed reaction is hexan-3-one + NADPH + O2 + H(+) = ethyl butanoate + NADP(+) + H2O. The enzyme catalyses hexan-3-one + NADPH + O2 + H(+) = propyl propanoate + NADP(+) + H2O. It carries out the reaction heptan-4-one + NADPH + O2 + H(+) = propyl butanoate + NADP(+) + H2O. It catalyses the reaction (2E)-geranial + NADPH + O2 + H(+) = (1E)-2,6-dimethylhepta-1,5-dien-1-yl formate + NADP(+) + H2O. The catalysed reaction is sulcatone + NADPH + O2 + H(+) = 4-methylpent-3-en-1-yl acetate + NADP(+) + H2O. Functionally, acts as a Baeyer-Villiger monooxygenase on a broad range of substrates. Catalyzes the insertion of an oxygen atom into a carbon-carbon bond adjacent to a carbonyl, which converts ketones to esters. Active on diverse carbonyl compounds, whereas soft nucleophiles are mostly non- or poorly reactive. In contrast with other forms of FMO it is non- or poorly active on 'classical' substrates such as drugs, pesticides, and dietary components containing soft nucleophilic heteroatoms. Able to oxidize drug molecules bearing a carbonyl group on an aliphatic chain, such as nabumetone and pentoxifylline. Also, in the absence of substrates, shows slow but yet significant NADPH oxidase activity. Acts as a positive modulator of cholesterol biosynthesis as well as glucose homeostasis, promoting metabolic aging via pleiotropic effects. In Rattus norvegicus (Rat), this protein is Flavin-containing monooxygenase 5.